Here is a 174-residue protein sequence, read N- to C-terminus: NADH-quinone oxidoreductase subunit B 2 (174 aa).

Residues C38, C39, C104, and C133 each contribute to the [4Fe-4S] cluster site.

It belongs to the complex I 20 kDa subunit family. As to quaternary structure, NDH-1 is composed of 14 different subunits. Subunits NuoB, C, D, E, F, and G constitute the peripheral sector of the complex. [4Fe-4S] cluster serves as cofactor.

Its subcellular location is the cell membrane. The catalysed reaction is a quinone + NADH + 5 H(+)(in) = a quinol + NAD(+) + 4 H(+)(out). Its function is as follows. NDH-1 shuttles electrons from NADH, via FMN and iron-sulfur (Fe-S) centers, to quinones in the respiratory chain. The immediate electron acceptor for the enzyme in this species is believed to be ubiquinone. Couples the redox reaction to proton translocation (for every two electrons transferred, four hydrogen ions are translocated across the cytoplasmic membrane), and thus conserves the redox energy in a proton gradient. This is NADH-quinone oxidoreductase subunit B 2 from Chloroflexus aurantiacus (strain ATCC 29366 / DSM 635 / J-10-fl).